The sequence spans 1276 residues: Component of gems protein 5 (1276 aa).

The tract at residues 53-55 (NWY) is interaction with U4 snRNA. WD repeat units follow at residues 92–139 (GHTD…DDHN), 183–223 (EHKA…VFPI), 228–268 (GNNI…TVCK), 271–336 (AHSA…IESG), 364–405 (NDKQ…SPPE), 438–481 (TTKN…IKIQ), 485–522 (GFVY…KDAY), and 530–574 (GIQS…SKIF). A disordered region spans residues 138-157 (HNEDTEIGDDFKHGSGGGGS). Residues 586–652 (IWKPPPTPTP…NSNNEQQPNK (67 aa)) form a disordered region. A compositionally biased stretch (low complexity) spans 598–646 (NINNNNNNNNNNNNNNNNNNNNNNNNNNNNNNNNNNNNINNNNNNNSNN). WD repeat units follow at residues 688–727 (TFSK…LTRI) and 729–771 (EHKK…NQNE). The segment covering 772–793 (NEKKIDNEKGKENENEKGKENE) has biased composition (basic and acidic residues). A disordered region spans residues 772-809 (NEKKIDNEKGKENENEKGKENENENENENENENENENE). A coiled-coil region spans residues 778–829 (NEKGKENENEKGKENENENENENENENENENENEIENIVNNNNENDTEIEIK). Residues 794-809 (NENENENENENENENE) are compositionally biased toward acidic residues. 2 WD repeats span residues 863 to 903 (GHKN…AISN) and 906 to 946 (GHDG…FKTV). Positions 967 to 997 (ITEQQQQQQQPQSPIKSNPDQSNNPSLVPPI) are disordered. Residues 979–992 (SPIKSNPDQSNNPS) show a composition bias toward polar residues.

The protein belongs to the WD repeat gemin-5 family. As to quaternary structure, part of the core SMN complex.

The protein resides in the nucleus. Its subcellular location is the nucleoplasm. It localises to the gem. It is found in the cytoplasm. Its function is as follows. The SMN complex catalyzes the assembly of small nuclear ribonucleoproteins (snRNPs), the building blocks of the spliceosome, and thereby plays an important role in the splicing of cellular pre-mRNAs. Most spliceosomal snRNPs contain a common set of Sm proteins SNRPB, SNRPD1, SNRPD2, SNRPD3, SNRPE, SNRPF and SNRPG that assemble in a heptameric protein ring on the Sm site of the small nuclear RNA to form the core snRNP (Sm core). In the cytosol, the Sm proteins SNRPD1, SNRPD2, SNRPE, SNRPF and SNRPG are trapped in an inactive 6S pICln-Sm complex by the chaperone CLNS1A that controls the assembly of the core snRNP. To assemble core snRNPs, the SMN complex accepts the trapped 5Sm proteins from CLNS1A forming an intermediate. Binding of snRNA inside 5Sm ultimately triggers eviction of the SMN complex, thereby allowing binding of SNRPD3 and SNRPB to complete assembly of the core snRNP. Within the SMN complex, GEMIN5 recognizes and delivers the small nuclear RNAs (snRNAs) to the SMN complex. Binds to the 7-methylguanosine cap of RNA molecules. The sequence is that of Component of gems protein 5 (gemin5) from Dictyostelium discoideum (Social amoeba).